The following is a 354-amino-acid chain: Tsukushi (354 aa).

Residues 1–17 (MLCSLFLLLLAVGRVQT) form the signal peptide. Residues 18–59 (TRPCFPGCQCEEETFGLFDSFSLIRVDCSSLGPHIVPVPIPL) enclose the LRRNT domain. LRR repeat units lie at residues 60–81 (DTAHLDLSSNRLETVNESVLAG), 86–107 (TLAGLDLSYNLLTSIMPSAFSR), 110–131 (YLESLDLSHNGLAALPAEIFTS), 133–154 (PLSDINLSHNRLREVSISAFTT), 160–180 (ALHVDLSHNLIHRLLPHPARA), 186–207 (TIQSLNLSWNRFRAVPDLRDLP), 208–228 (LRYLSLDGNPLATINPDAFMG), 231–253 (GLTHLSLASLQGILHLPPHGFRE), 256–277 (GLQVLDLSGNPKLKWAGAEVFS), and 281–302 (LLQELDLSGSSLVPLPEMLLHH). N-linked (GlcNAc...) asparagine glycosylation occurs at asparagine 75. The N-linked (GlcNAc...) asparagine glycan is linked to asparagine 138. N-linked (GlcNAc...) asparagine glycosylation occurs at asparagine 191.

Interacts with FZD4 (via FZ domain); competes with WNT2B for binding to FZD4, inhibiting Wnt signaling and repressing peripheral eye development. Interacts with TGFB1; the interaction contributes to regulation of the hair cycle. Interacts with netrin. Interacts with CCN2. In terms of tissue distribution, expressed in macrophages in inflamed wounds with wound expression starting 2 days post-wounding (dpw) (at protein level). At 7 dpw, expressed from epidermis and extracellular matrix in the wound edge to neoepidermis and granulation tissue and in panniculus carnosus under the granulation tissue (at protein level). After fibrosis, disappears in the dermal area at 11 dpw (at protein level). Expressed in the hair follicle during morphogenesis and the hair cycle (at protein level). In embryonic brain, strong expression in the olfactory bulb, anterior olfactory nucleus, neocortex, piriform cortex, glial wedge, midline zipper glia, indusium griseum and the area surrounding the anterior commissure (AC) but not on AC axons (at protein level). In the adult eye, expressed in retinal layers, lens epithelium, and ciliary body where it is expressed predominantly in the inner non-pigmented layer. Expressed in almost all brain regions in the embryo, in the cortex and the lateral ventricle at P0 and is restricted to the subventricular zone and lateral nucleus of the amygdala in adults. Prominent expression in hippocampal regions from early postnatal stages until postnatal day 15 and gradually declines at later stages. Expressed in almost all bone regions in the femurs of juveniles. In the inner ear, accumulates in nonprosensory regions during early embryonic stages and in both nonprosensory and prosensory regions in late embryonic stages. In the adult ear, expressed in the organ of Corti, spiral ganglion cells, and the stria vascularis. Highly expressed in the liver where it is detected primarily in hepatocytes but not in non-parenchymal cells.

Its subcellular location is the secreted. Functionally, contributes to various developmental events and other processes such as wound healing and cholesterol homeostasis through its interactions with multiple signaling pathways. Wnt signaling inhibitor which competes with WNT2B for binding to Wnt receptor FZD4 and represses WNT2B-dependent development of the peripheral eye. Plays a role in regulating the hair cycle by controlling TGFB1 signaling. Required for the development of the anterior commissure in the brain by inhibiting neurite outgrowth. Essential for terminal differentiation of hippocampal neural stem cells. Plays a role in regulating bone elongation and bone mass by modulating growth plate chondrocyte function and overall body size. Required for development of the inner ear through its involvement in stereocilia formation in inner hair cells. Facilitates wound healing by inhibiting secretion of TGFB1 from macrophages which prevents myofibroblast differentiation, maintaining inflammatory cell quiescence. Plays a role in cholesterol homeostasis by reducing circulating high-density lipoprotein cholesterol, lowering cholesterol efflux capacity and decreasing cholesterol-to-bile acid conversion in the liver. In one study, shown to negatively regulate sympathetic innervation in brown fat, leading to reduced energy expenditure. In another study, shown not to affect brown fat thermogenic capacity, body weight gain or glucose homeostasis. This is Tsukushi from Mus musculus (Mouse).